A 248-amino-acid chain; its full sequence is 5'-nucleotidase SurE (248 aa).

Positions 8, 9, 39, and 91 each coordinate a divalent metal cation.

Belongs to the SurE nucleotidase family. A divalent metal cation is required as a cofactor.

The protein resides in the cytoplasm. It carries out the reaction a ribonucleoside 5'-phosphate + H2O = a ribonucleoside + phosphate. In terms of biological role, nucleotidase that shows phosphatase activity on nucleoside 5'-monophosphates. The chain is 5'-nucleotidase SurE from Neisseria meningitidis serogroup C (strain 053442).